We begin with the raw amino-acid sequence, 657 residues long: Conserved oligomeric Golgi complex subunit 6 (657 aa).

The protein belongs to the COG6 family. As to quaternary structure, component of the conserved oligomeric Golgi complex which is composed of eight different subunits and is required for normal Golgi morphology and localization.

The protein resides in the golgi apparatus membrane. Functionally, required for normal Golgi function. In Bos taurus (Bovine), this protein is Conserved oligomeric Golgi complex subunit 6 (COG6).